The sequence spans 390 residues: Protein phosphatase methylesterase 1 (390 aa).

The tract at residues 19–50 (FGLSSLSEDPDESESNSNYFSPTPQPPNELRT) is disordered. The 233-residue stretch at 100–332 (PIFICHHGAG…NLIIGQMQGK (233 aa)) folds into the AB hydrolase-1 domain. Active-site residues include Ser-186, Asp-213, and His-346.

Belongs to the AB hydrolase superfamily.

The catalysed reaction is [phosphatase 2A protein]-C-terminal L-leucine methyl ester + H2O = [phosphatase 2A protein]-C-terminal L-leucine + methanol + H(+). Functionally, demethylates proteins that have been reversibly carboxymethylated. Demethylates the phosphatase PP2A catalytic subunit. The protein is Protein phosphatase methylesterase 1 (PPE1) of Debaryomyces hansenii (strain ATCC 36239 / CBS 767 / BCRC 21394 / JCM 1990 / NBRC 0083 / IGC 2968) (Yeast).